We begin with the raw amino-acid sequence, 719 residues long: Penicillin-binding protein 1A (719 aa).

The interval 62–223 is transglycosylase; it reads LIADLGSERR…NQYDPYSHPE (162 aa). Residue Glu91 is the Proton donor; for transglycosylase activity of the active site. The interval 297–611 is transpeptidase; the sequence is DVYTNVDQEA…RLTPLVGNGL (315 aa). The active-site Acyl-ester intermediate; for transpeptidase activity is Ser370. The disordered stretch occupies residues 652–719; that stretch reads ARSTWSSPAP…QNQNPQPAQP (68 aa). Over residues 654–719 the composition is skewed to low complexity; it reads STWSSPAPQQ…QNQNPQPAQP (66 aa).

The protein in the N-terminal section; belongs to the glycosyltransferase 51 family. In the C-terminal section; belongs to the transpeptidase family. In terms of assembly, interacts with MreC in the elongasome.

Its subcellular location is the secreted. The enzyme catalyses [GlcNAc-(1-&gt;4)-Mur2Ac(oyl-L-Ala-gamma-D-Glu-L-Lys-D-Ala-D-Ala)](n)-di-trans,octa-cis-undecaprenyl diphosphate + beta-D-GlcNAc-(1-&gt;4)-Mur2Ac(oyl-L-Ala-gamma-D-Glu-L-Lys-D-Ala-D-Ala)-di-trans,octa-cis-undecaprenyl diphosphate = [GlcNAc-(1-&gt;4)-Mur2Ac(oyl-L-Ala-gamma-D-Glu-L-Lys-D-Ala-D-Ala)](n+1)-di-trans,octa-cis-undecaprenyl diphosphate + di-trans,octa-cis-undecaprenyl diphosphate + H(+). It catalyses the reaction Preferential cleavage: (Ac)2-L-Lys-D-Ala-|-D-Ala. Also transpeptidation of peptidyl-alanyl moieties that are N-acyl substituents of D-alanine.. Its pathway is cell wall biogenesis; peptidoglycan biosynthesis. Cell wall formation. This Streptococcus pneumoniae (strain ATCC BAA-255 / R6) protein is Penicillin-binding protein 1A (pbpA).